A 179-amino-acid chain; its full sequence is Outer-membrane lipoprotein carrier protein (179 aa).

The signal sequence occupies residues methionine 1–glycine 22.

It belongs to the LolA family. Monomer.

It is found in the periplasm. Participates in the translocation of lipoproteins from the inner membrane to the outer membrane. Only forms a complex with a lipoprotein if the residue after the N-terminal Cys is not an aspartate (The Asp acts as a targeting signal to indicate that the lipoprotein should stay in the inner membrane). In Helicobacter hepaticus (strain ATCC 51449 / 3B1), this protein is Outer-membrane lipoprotein carrier protein.